Consider the following 475-residue polypeptide: ATP synthase subunit beta (475 aa).

152 to 159 (GGAGVGKT) serves as a coordination point for ATP.

Belongs to the ATPase alpha/beta chains family. As to quaternary structure, F-type ATPases have 2 components, CF(1) - the catalytic core - and CF(0) - the membrane proton channel. CF(1) has five subunits: alpha(3), beta(3), gamma(1), delta(1), epsilon(1). CF(0) has three main subunits: a(1), b(2) and c(9-12). The alpha and beta chains form an alternating ring which encloses part of the gamma chain. CF(1) is attached to CF(0) by a central stalk formed by the gamma and epsilon chains, while a peripheral stalk is formed by the delta and b chains.

The protein localises to the cell membrane. The enzyme catalyses ATP + H2O + 4 H(+)(in) = ADP + phosphate + 5 H(+)(out). Produces ATP from ADP in the presence of a proton gradient across the membrane. The catalytic sites are hosted primarily by the beta subunits. This chain is ATP synthase subunit beta, found in Wolbachia pipientis wMel.